Consider the following 621-residue polypeptide: tRNA uridine 5-carboxymethylaminomethyl modification enzyme MnmG (621 aa).

Residue 9 to 14 (GGGHAG) participates in FAD binding. Residue 268–282 (GPRYCPSIEDKINRF) participates in NAD(+) binding.

The protein belongs to the MnmG family. As to quaternary structure, homodimer. Heterotetramer of two MnmE and two MnmG subunits. It depends on FAD as a cofactor.

Its subcellular location is the cytoplasm. NAD-binding protein involved in the addition of a carboxymethylaminomethyl (cmnm) group at the wobble position (U34) of certain tRNAs, forming tRNA-cmnm(5)s(2)U34. The sequence is that of tRNA uridine 5-carboxymethylaminomethyl modification enzyme MnmG from Campylobacter fetus subsp. fetus (strain 82-40).